The chain runs to 365 residues: Outer membrane lipoprotein A (365 aa).

The first 19 residues, 1 to 19, serve as a signal peptide directing secretion; the sequence is MNIATKLMASLVASVVLTA. The interval 19 to 121 is disordered; that stretch reads ACSGGGSSGS…KGEELSKDKS (103 aa). A lipid anchor (N-palmitoyl cysteine) is attached at C20. C20 is lipidated: S-diacylglycerol cysteine. Basic and acidic residues-rich tracts occupy residues 48-68 and 105-121; these read EQPK…EPKE and NPQK…KDKS.

It is found in the cell outer membrane. In Actinobacillus pleuropneumoniae (Haemophilus pleuropneumoniae), this protein is Outer membrane lipoprotein A (omlA).